Consider the following 1137-residue polypeptide: MARYTQRPENALKRANEFIEVGKPLRALDTLQEVFRNKRWNYAYSETVIEPLMFKYLYLCVELKKSHIAKEGLFQYRNMFQLVNVNSLENVIRGYLKMAEEHTEAAQAQSSAAVAVLELDDLDNIATPESILMSAVCGEDAQDRSDRTILLPWVKFLWESYCQCLELLRVNTHCEALYHDIARMAFHFCLKYNRKSEFRRLCDKLRKHLEDICKSSNQTTGVSINKVETQQLCLDTRLYLLDSAIQMELWQEAYRAIEDIHGLMALSKKTPVPKTMANYYQKLAMVFSKAGNQLFHAAALLKLFQLTRELKKNLTKDDLQRMAAHVLLATLSIPLPSAHPEFDRFIEADKSPLEKAQKLAVLLGLPQPPTRVSLIREVVRLNVPQLVSEDFRNLYNWLEVDFNPLNLCKRIQSIVDFIENGPENALLTPYIQSLKDVTIMRLIRQISQVYESIEFQRLMQLASFCNIFELEKLLVESVRHNDMQIRIDHQKNSIYFGTDLTESQREYRPDGPALQSMPSEQIRSQLVNMSTVLTRAVSIVYPNRERDQRAKLRTQMVNHYHEIKDREHQRILQRQKIIEDRKEYIEKQNNAREEEEARRQEEESRKAKLAEQKRLEQEQEERERKRHQNEIQAIREKSLKEKVQQISQTAHGKKMLSKLDEEGIKKLDAEQIAKRESEELQREAKELQSKLKSQEKKIDYFERAKRLEEIPLFEKYLAEKQVKDKEFWEATEKTRIENAIAERKDAVGQQERLKRMYPDRDEFLDALKKERASLYVEKLKKFEAALEAERKKRLADRIIRRREERRQAFLREKEEERLRKEEEIRLAQAAEERAAAEARRLEREAEDEKRRAQYEKQRAKEEEAERKIKEDRERLARELASERERTEKERDTWRPRGGDRPSAPSGGSGEWRRGAPTVNNERGIERGGDRIERGGDRIERGGERIERGGDRDRKDNEGADSSWRVRREPDSQRAAAPKDSGAPQSRDEKWRRGGERDRDFRNDGARRDRDDGPRRDRDDGPRRDRDDERSGFRRNDGPRRTEEPQRETGGNWRDAPRHADRENRRTAGGERRDRDVRETRGDQRGPAPKEAVSSGGGGNWRTTPAAREEKPATKRDQPQEKENKAADDGEWTSVKRR.

Residues L319–T501 enclose the PCI domain. 2 stretches are compositionally biased toward basic and acidic residues: residues Q588–E623 and A829–D899. 2 disordered regions span residues Q588–I631 and A829–R1137. The residue at position 908 (S908) is a Phosphoserine. Composition is skewed to basic and acidic residues over residues R922 to S971, S985 to R1046, D1054 to Q1083, and A1106 to D1127.

The protein belongs to the eIF-3 subunit A family. As to quaternary structure, component of the eukaryotic translation initiation factor 3 (eIF-3) complex. The eIF-3 complex interacts with pix.

The protein resides in the cytoplasm. In terms of biological role, RNA-binding component of the eukaryotic translation initiation factor 3 (eIF-3) complex, which is involved in protein synthesis of a specialized repertoire of mRNAs and, together with other initiation factors, stimulates binding of mRNA and methionyl-tRNAi to the 40S ribosome. The eIF-3 complex specifically targets and initiates translation of a subset of mRNAs involved in cell proliferation. The protein is Eukaryotic translation initiation factor 3 subunit A of Drosophila yakuba (Fruit fly).